The following is a 257-amino-acid chain: Imidazole glycerol phosphate synthase subunit HisF (257 aa).

Active-site residues include aspartate 12 and aspartate 131.

This sequence belongs to the HisA/HisF family. In terms of assembly, heterodimer of HisH and HisF.

Its subcellular location is the cytoplasm. It catalyses the reaction 5-[(5-phospho-1-deoxy-D-ribulos-1-ylimino)methylamino]-1-(5-phospho-beta-D-ribosyl)imidazole-4-carboxamide + L-glutamine = D-erythro-1-(imidazol-4-yl)glycerol 3-phosphate + 5-amino-1-(5-phospho-beta-D-ribosyl)imidazole-4-carboxamide + L-glutamate + H(+). The protein operates within amino-acid biosynthesis; L-histidine biosynthesis; L-histidine from 5-phospho-alpha-D-ribose 1-diphosphate: step 5/9. IGPS catalyzes the conversion of PRFAR and glutamine to IGP, AICAR and glutamate. The HisF subunit catalyzes the cyclization activity that produces IGP and AICAR from PRFAR using the ammonia provided by the HisH subunit. The polypeptide is Imidazole glycerol phosphate synthase subunit HisF (Hydrogenovibrio crunogenus (strain DSM 25203 / XCL-2) (Thiomicrospira crunogena)).